The following is a 550-amino-acid chain: MAKFQAPVINDNALGWGPCAIPDQFKDMPYQPFSKGDRLGKVADWTGATYQDKRYTNKYSSQFGGGSQYAYFHDEDETSFQLVDTTKMQKTAYQRNRMRFAQRNLRRDKDRRNMLQFNMQTLPKSAKQKERDRLRLQKKFQKQFGVRQKWDQRSQAQLKPRDSSVEVRSDWEVKEEMDFPRLMKMRYMEVADPTDIECCGAVEYYDKAFDRITTRNERPLRSIKRIFHTVTTTDDPVIRKLAKTQGNVFATDAILATLMCCTRSVNSWDIVVQRVGSKIFFDKRDNSDFDLLTVSETANEPPQDEVNSLNSPRNLAMEATYINHNFSQQCLRMGKEKHTFPNPNPFIEDDVDKNEVASVAYRYRRWKLGDDIDLVVRCEHDGVMTGANGEVSFINIKTLNEWDSKYCNGVDWRQKLDSQRGAVIATELKNNSYKLARWTCCALLAGSEYLKLGYVSRYNVKDSTRHVVLGTQQFKPNEFANQINLSMENAWGILRCVVDICMKLDEGKYLILKDPNKQVIRIYSLPDGTFSSDEEEDDDDEDEEVEEEES.

An RNA gate region spans residues 288 to 302 (DFDLLTVSETANEPP). A disordered region spans residues 526–550 (PDGTFSSDEEEDDDDEDEEVEEEES). The span at 532-550 (SDEEEDDDDEDEEVEEEES) shows a compositional bias: acidic residues.

It belongs to the eIF-3 subunit D family. Component of the eukaryotic translation initiation factor 3 (eIF-3) complex, which is composed of 13 subunits: eif3a, eif3b, eif3c, eif3d, eif3e, eif3f, eif3g, eif3h, eif3i, eif3j, eif3k, eif3l and eif3m.

It is found in the cytoplasm. Its function is as follows. mRNA cap-binding component of the eukaryotic translation initiation factor 3 (eIF-3) complex, which is involved in protein synthesis of a specialized repertoire of mRNAs and, together with other initiation factors, stimulates binding of mRNA and methionyl-tRNAi to the 40S ribosome. The eIF-3 complex specifically targets and initiates translation of a subset of mRNAs involved in cell proliferation. In the eIF-3 complex, eif3d specifically recognizes and binds the 7-methylguanosine cap of a subset of mRNAs. This Xenopus laevis (African clawed frog) protein is Eukaryotic translation initiation factor 3 subunit D (eif3d).